The sequence spans 709 residues: Phosphoribosylformylglycinamidine synthase subunit PurL (709 aa).

Residue His-36 is part of the active site. 2 residues coordinate ATP: Tyr-39 and Lys-80. Position 82 (Glu-82) interacts with Mg(2+). Substrate is bound by residues Ser-83–His-86 and Arg-105. His-84 acts as the Proton acceptor in catalysis. Asp-106 contacts Mg(2+). Position 226 (Gln-226) interacts with substrate. A Mg(2+)-binding site is contributed by Asp-252. A substrate-binding site is contributed by Glu-294–Gln-296. Asp-470 and Gly-507 together coordinate ATP. Ser-510 lines the substrate pocket.

It belongs to the FGAMS family. As to quaternary structure, monomer. Part of the FGAM synthase complex composed of 1 PurL, 1 PurQ and 2 PurS subunits.

The protein resides in the cytoplasm. The enzyme catalyses N(2)-formyl-N(1)-(5-phospho-beta-D-ribosyl)glycinamide + L-glutamine + ATP + H2O = 2-formamido-N(1)-(5-O-phospho-beta-D-ribosyl)acetamidine + L-glutamate + ADP + phosphate + H(+). It functions in the pathway purine metabolism; IMP biosynthesis via de novo pathway; 5-amino-1-(5-phospho-D-ribosyl)imidazole from N(2)-formyl-N(1)-(5-phospho-D-ribosyl)glycinamide: step 1/2. Functionally, part of the phosphoribosylformylglycinamidine synthase complex involved in the purines biosynthetic pathway. Catalyzes the ATP-dependent conversion of formylglycinamide ribonucleotide (FGAR) and glutamine to yield formylglycinamidine ribonucleotide (FGAM) and glutamate. The FGAM synthase complex is composed of three subunits. PurQ produces an ammonia molecule by converting glutamine to glutamate. PurL transfers the ammonia molecule to FGAR to form FGAM in an ATP-dependent manner. PurS interacts with PurQ and PurL and is thought to assist in the transfer of the ammonia molecule from PurQ to PurL. The polypeptide is Phosphoribosylformylglycinamidine synthase subunit PurL (Saccharolobus solfataricus (strain ATCC 35092 / DSM 1617 / JCM 11322 / P2) (Sulfolobus solfataricus)).